Reading from the N-terminus, the 303-residue chain is Coenzyme PQQ synthesis protein B (303 aa).

The protein belongs to the PqqB family.

The protein operates within cofactor biosynthesis; pyrroloquinoline quinone biosynthesis. Functionally, may be involved in the transport of PQQ or its precursor to the periplasm. The polypeptide is Coenzyme PQQ synthesis protein B (Pseudomonas entomophila (strain L48)).